The primary structure comprises 116 residues: Secreted RxLR effector protein 9 (116 aa).

An N-terminal signal peptide occupies residues 1-17; the sequence is MRLIYIFMVSIVTTLHA. A RxLR-dEER motif is present at residues 49-64; the sequence is RILRGTDGNVNREQER.

The protein belongs to the RxLR effector family.

It is found in the secreted. Its subcellular location is the host cytoplasm. It localises to the host nucleus. Its function is as follows. Effector that acts as a broad suppressor of cell death to interrupt plant immunity. Inhibits cell death induced by cell death-inducing proteins, including the PAMP elicitor INF1 from P.infestans. The sequence is that of Secreted RxLR effector protein 9 from Plasmopara viticola (Downy mildew of grapevine).